A 225-amino-acid polypeptide reads, in one-letter code: Two-component response regulator ARR8 (225 aa).

Residues 10-145 (HVLAVDDSLF…DLTKLKPHMM (136 aa)) form the Response regulatory domain. A 4-aspartylphosphate modification is found at Asp78.

It belongs to the ARR family. Type-A subfamily. Post-translationally, two-component system major event consists of a His-to-Asp phosphorelay between a sensor histidine kinase (HK) and a response regulator (RR). In plants, the His-to-Asp phosphorelay involves an additional intermediate named Histidine-containing phosphotransfer protein (HPt). This multistep phosphorelay consists of a His-Asp-His-Asp sequential transfer of a phosphate group between first a His and an Asp of the HK protein, followed by the transfer to a conserved His of the HPt protein and finally the transfer to an Asp in the receiver domain of the RR protein. In terms of tissue distribution, predominantly expressed in roots.

Its subcellular location is the nucleus. In terms of biological role, functions as a response regulator involved in His-to-Asp phosphorelay signal transduction system. Phosphorylation of the Asp residue in the receiver domain activates the ability of the protein to promote the transcription of target genes. Type-A response regulators seem to act as negative regulators of the cytokinin signaling. In Arabidopsis thaliana (Mouse-ear cress), this protein is Two-component response regulator ARR8 (ARR8).